The sequence spans 72 residues: DNA-directed RNA polymerase subunit omega (72 aa).

The protein belongs to the RNA polymerase subunit omega family. In terms of assembly, the RNAP catalytic core consists of 2 alpha, 1 beta, 1 beta' and 1 omega subunit. When a sigma factor is associated with the core the holoenzyme is formed, which can initiate transcription.

It carries out the reaction RNA(n) + a ribonucleoside 5'-triphosphate = RNA(n+1) + diphosphate. Its function is as follows. Promotes RNA polymerase assembly. Latches the N- and C-terminal regions of the beta' subunit thereby facilitating its interaction with the beta and alpha subunits. The chain is DNA-directed RNA polymerase subunit omega from Clostridium botulinum (strain Langeland / NCTC 10281 / Type F).